The primary structure comprises 24 residues: Ascaphin-6 (24 aa).

Expressed by the skin glands.

Its subcellular location is the secreted. In terms of biological role, antimicrobial peptide that shows higher potency against Gram-negative bacteria than against Gram-positive bacteria. Has a very week hemolytic activity. The chain is Ascaphin-6 from Ascaphus truei (Coastal tailed frog).